The following is a 212-amino-acid chain: Pyridoxine/pyridoxamine 5'-phosphate oxidase (212 aa).

Residues 8-11 (RREY) and lysine 66 contribute to the substrate site. FMN is bound by residues 61-66 (RIVLLK), 76-77 (FT), arginine 82, lysine 83, and glutamine 105. Substrate is bound by residues tyrosine 123, arginine 127, and serine 131. Residues 140 to 141 (QS) and tryptophan 185 contribute to the FMN site. Substrate is bound at residue 191 to 193 (RLH). Position 195 (arginine 195) interacts with FMN.

The protein belongs to the pyridoxamine 5'-phosphate oxidase family. Homodimer. FMN serves as cofactor.

The enzyme catalyses pyridoxamine 5'-phosphate + O2 + H2O = pyridoxal 5'-phosphate + H2O2 + NH4(+). It carries out the reaction pyridoxine 5'-phosphate + O2 = pyridoxal 5'-phosphate + H2O2. The protein operates within cofactor metabolism; pyridoxal 5'-phosphate salvage; pyridoxal 5'-phosphate from pyridoxamine 5'-phosphate: step 1/1. Its pathway is cofactor metabolism; pyridoxal 5'-phosphate salvage; pyridoxal 5'-phosphate from pyridoxine 5'-phosphate: step 1/1. In terms of biological role, catalyzes the oxidation of either pyridoxine 5'-phosphate (PNP) or pyridoxamine 5'-phosphate (PMP) into pyridoxal 5'-phosphate (PLP). In Shewanella pealeana (strain ATCC 700345 / ANG-SQ1), this protein is Pyridoxine/pyridoxamine 5'-phosphate oxidase.